The sequence spans 218 residues: Pyridoxine/pyridoxamine 5'-phosphate oxidase (218 aa).

Substrate is bound by residues 14 to 17 (RREY) and Lys-72. Residues 67 to 72 (RIVLLK), 82 to 83 (YT), Arg-88, Lys-89, and Gln-111 contribute to the FMN site. Residues Tyr-129, Arg-133, and Ser-137 each contribute to the substrate site. FMN contacts are provided by residues 146–147 (QS) and Trp-191. 197 to 199 (RLH) serves as a coordination point for substrate. Arg-201 is a binding site for FMN.

It belongs to the pyridoxamine 5'-phosphate oxidase family. As to quaternary structure, homodimer. FMN serves as cofactor.

The enzyme catalyses pyridoxamine 5'-phosphate + O2 + H2O = pyridoxal 5'-phosphate + H2O2 + NH4(+). It carries out the reaction pyridoxine 5'-phosphate + O2 = pyridoxal 5'-phosphate + H2O2. It functions in the pathway cofactor metabolism; pyridoxal 5'-phosphate salvage; pyridoxal 5'-phosphate from pyridoxamine 5'-phosphate: step 1/1. The protein operates within cofactor metabolism; pyridoxal 5'-phosphate salvage; pyridoxal 5'-phosphate from pyridoxine 5'-phosphate: step 1/1. Catalyzes the oxidation of either pyridoxine 5'-phosphate (PNP) or pyridoxamine 5'-phosphate (PMP) into pyridoxal 5'-phosphate (PLP). This chain is Pyridoxine/pyridoxamine 5'-phosphate oxidase, found in Escherichia fergusonii (strain ATCC 35469 / DSM 13698 / CCUG 18766 / IAM 14443 / JCM 21226 / LMG 7866 / NBRC 102419 / NCTC 12128 / CDC 0568-73).